Here is an 80-residue protein sequence, read N- to C-terminus: Reactive oxygen species modulator 1 (80 aa).

Residues 22-44 (MGFMMGFAVGMAAGAMFGTFSCL) form a helical membrane-spanning segment. The sufficient for antibacterial activity stretch occupies residues 42-60 (SCLRIGMRGRELMGGVGKT).

The protein belongs to the MGR2 family.

Its subcellular location is the mitochondrion inner membrane. Its function is as follows. Has antibacterial activity against a variety of bacteria including S.aureus, P.aeruginosa and M.tuberculosis. Acts by inducing bacterial membrane breakage. In terms of biological role, induces production of reactive oxygen species (ROS) which are necessary for cell proliferation. May play a role in inducing oxidative DNA damage and replicative senescence. May play a role in the coordination of mitochondrial morphology and cell proliferation. In Danio rerio (Zebrafish), this protein is Reactive oxygen species modulator 1 (romo1).